Reading from the N-terminus, the 601-residue chain is Casbene synthase, chloroplastic (601 aa).

A chloroplast-targeting transit peptide spans 1-56 (MALPSAAMQSNPEKLNLFHRLSSLPTTSLEYGNNRFPFFSSSAKSHFKKPTQACLS). Mg(2+) is bound by residues Asp-355, Asp-359, Asn-499, Ser-503, and Glu-507. The DDXXD motif signature appears at 355-359 (DDTID).

Belongs to the terpene synthase family. Requires Mg(2+) as cofactor.

The protein resides in the plastid. Its subcellular location is the chloroplast. It catalyses the reaction (2E,6E,10E)-geranylgeranyl diphosphate = casbene + diphosphate. Its function is as follows. Catalyzes the cyclization of geranylgeranyl diphosphate to casbene, a diterpene phytoalexin with antibacterial and antifungal activity. This chain is Casbene synthase, chloroplastic, found in Ricinus communis (Castor bean).